Reading from the N-terminus, the 475-residue chain is Aspartyl/glutamyl-tRNA(Asn/Gln) amidotransferase subunit B (475 aa).

The protein belongs to the GatB/GatE family. GatB subfamily. Heterotrimer of A, B and C subunits.

The enzyme catalyses L-glutamyl-tRNA(Gln) + L-glutamine + ATP + H2O = L-glutaminyl-tRNA(Gln) + L-glutamate + ADP + phosphate + H(+). The catalysed reaction is L-aspartyl-tRNA(Asn) + L-glutamine + ATP + H2O = L-asparaginyl-tRNA(Asn) + L-glutamate + ADP + phosphate + 2 H(+). Functionally, allows the formation of correctly charged Asn-tRNA(Asn) or Gln-tRNA(Gln) through the transamidation of misacylated Asp-tRNA(Asn) or Glu-tRNA(Gln) in organisms which lack either or both of asparaginyl-tRNA or glutaminyl-tRNA synthetases. The reaction takes place in the presence of glutamine and ATP through an activated phospho-Asp-tRNA(Asn) or phospho-Glu-tRNA(Gln). The polypeptide is Aspartyl/glutamyl-tRNA(Asn/Gln) amidotransferase subunit B (Chlorobium phaeobacteroides (strain DSM 266 / SMG 266 / 2430)).